The primary structure comprises 474 residues: mRNA cap guanine-N(7) methyltransferase (474 aa).

Over residues 1–12 (MSTDSYTPSQEP) the composition is skewed to polar residues. Positions 1 to 106 (MSTDSYTPSQ…GHEGDEGDED (106 aa)) are disordered. Basic and acidic residues predominate over residues 56 to 100 (SDIDGKYDKYGERRNAHTTTRDSRLDRLKRVRQKSAEREDVGHEG). The 305-residue stretch at 170–474 (SPIYKMRNFN…FYIGFVFEKV (305 aa)) folds into the mRNA cap 0 methyltransferase domain. Residue 179-180 (NN) coordinates mRNA. S-adenosyl-L-methionine is bound by residues Lys-183, Cys-207, Asp-229, Asp-269, Gln-299, and Tyr-304.

The protein belongs to the class I-like SAM-binding methyltransferase superfamily. mRNA cap 0 methyltransferase family.

The protein localises to the nucleus. The enzyme catalyses a 5'-end (5'-triphosphoguanosine)-ribonucleoside in mRNA + S-adenosyl-L-methionine = a 5'-end (N(7)-methyl 5'-triphosphoguanosine)-ribonucleoside in mRNA + S-adenosyl-L-homocysteine. Its function is as follows. Responsible for methylating the 5'-cap structure of mRNAs. The protein is mRNA cap guanine-N(7) methyltransferase (ABD1) of Candida albicans (strain SC5314 / ATCC MYA-2876) (Yeast).